Consider the following 309-residue polypeptide: HPr kinase/phosphorylase (309 aa).

Active-site residues include His-138 and Lys-159. 153-160 (GDSGIGKS) contributes to the ATP binding site. Ser-160 serves as a coordination point for Mg(2+). The active-site Proton acceptor; for phosphorylation activity. Proton donor; for dephosphorylation activity is the Asp-177. The tract at residues 201–210 (LEIRGVGIID) is important for the catalytic mechanism of both phosphorylation and dephosphorylation. Glu-202 provides a ligand contact to Mg(2+). Arg-243 is an active-site residue. An important for the catalytic mechanism of dephosphorylation region spans residues 264–269 (PVKTGR).

The protein belongs to the HPrK/P family. As to quaternary structure, homohexamer. Mg(2+) is required as a cofactor.

The enzyme catalyses [HPr protein]-L-serine + ATP = [HPr protein]-O-phospho-L-serine + ADP + H(+). The catalysed reaction is [HPr protein]-O-phospho-L-serine + phosphate + H(+) = [HPr protein]-L-serine + diphosphate. Its function is as follows. Catalyzes the ATP- as well as the pyrophosphate-dependent phosphorylation of a specific serine residue in HPr, a phosphocarrier protein of the phosphoenolpyruvate-dependent sugar phosphotransferase system (PTS). HprK/P also catalyzes the pyrophosphate-producing, inorganic phosphate-dependent dephosphorylation (phosphorolysis) of seryl-phosphorylated HPr (P-Ser-HPr). The two antagonistic activities of HprK/P are regulated by several intracellular metabolites, which change their concentration in response to the absence or presence of rapidly metabolisable carbon sources (glucose, fructose, etc.) in the growth medium. Therefore, by controlling the phosphorylation state of HPr, HPrK/P is a sensor enzyme that plays a major role in the regulation of carbon metabolism and sugar transport: it mediates carbon catabolite repression (CCR), and regulates PTS-catalyzed carbohydrate uptake and inducer exclusion. The polypeptide is HPr kinase/phosphorylase (Streptococcus thermophilus (strain ATCC BAA-491 / LMD-9)).